We begin with the raw amino-acid sequence, 1388 residues long: ESX-5 secretion system protein EccC5 (1388 aa).

2 helical membrane-spanning segments follow: residues tryptophan 38 to phenylalanine 58 and phenylalanine 65 to phenylalanine 85. FtsK domains lie at glycine 477–glutamine 679, glutamine 855–lysine 1049, and leucine 1158–glutamate 1351. ATP contacts are provided by residues glycine 500–serine 507, glycine 873–threonine 880, and glycine 1175–threonine 1182.

Part of the ESX-5 / type VII secretion system (T7SS), which is composed of cytosolic and membrane components. The ESX-5 membrane complex is composed of EccB5, EccC5, EccD5 and EccE5.

It is found in the cell inner membrane. Its function is as follows. Part of the ESX-5 specialized secretion system, which is responsible for the secretion of EsxN and a number of PE_PGRS and PPE proteins. This component is essential for ESX-5 complex stability and secretion. The polypeptide is ESX-5 secretion system protein EccC5 (Mycobacterium marinum (strain ATCC BAA-535 / M)).